The primary structure comprises 266 residues: MYTMGLDIGSTASKGVILKNGEDIVASETISSGTGTTGPSRVLEKLYGKTGLAREDIKKVVVTGYGRMNYSDADKQISELSCHARGVNFIIPETRTIIDIGGQDAKVLKLDNNGRLLNFLMNDKCAAGTGRFLDVMAKIIEVDVSELGSISMNSQNEVSISSTCTVFAESEVISHLSENAKIEDIVAGIHTSVAKRVSSLVKRIGVQRNVVMVGGVARNSGIVRAMAREINTEIIVPDIPQLTGALGAALYAFDEAKESQKEVKNI.

ATP-binding positions include 10 to 14 (STASK) and 102 to 104 (GQD). C125 lines the [4Fe-4S] cluster pocket. An ATP-binding site is contributed by D134. C164 is a [4Fe-4S] cluster binding site. ATP contacts are provided by G215 and Q241.

Belongs to the HadI activator family. Homodimer. Requires [4Fe-4S] cluster as cofactor.

Functionally, involved in the reductive branch of L-leucine fermentation. Required for the activation of (R)-2-hydroxyisocaproyl-CoA dehydratase. The reduced activator transfers one electron to the dehydratase concomitant with hydrolysis of ATP. This protein is extremely sensitive towards oxygen. In Clostridioides difficile (Peptoclostridium difficile), this protein is 2-hydroxyisocaproyl-CoA dehydratase activator.